The primary structure comprises 122 residues: Large ribosomal subunit protein uL14 (122 aa).

It belongs to the universal ribosomal protein uL14 family. Part of the 50S ribosomal subunit. Forms a cluster with proteins L3 and L19. In the 70S ribosome, L14 and L19 interact and together make contacts with the 16S rRNA in bridges B5 and B8.

Binds to 23S rRNA. Forms part of two intersubunit bridges in the 70S ribosome. The polypeptide is Large ribosomal subunit protein uL14 (Stenotrophomonas maltophilia (strain R551-3)).